The sequence spans 272 residues: MPGDHRRIRGPEESQPPQLYAADEEEAPGTRDPTRLRPVYARAGLLSQAKGSAYLEAGGTKVLCAVSGPRQAEGGERGGGPAGAGGEAPAALRGRLLCDFRRAPFAGRRRRAPPGGCEERELALALQEALEPAVRLGRYPRAQLEVSALLLEDGGSALAAALTAAALALADAGVEMYDLVVGCGLSLAPGPAPTWLLDPTRLEEERAAAGLTVALMPVLNQVAGLLGSGEGGLTESWAEAVRLGLEGCQRLYPVLQQSLVRAARRRGAAAQP.

The interval 1-36 (MPGDHRRIRGPEESQPPQLYAADEEEAPGTRDPTRL) is disordered.

The protein belongs to the RNase PH family. In terms of assembly, component of the RNA exosome core complex (Exo-9), composed of EXOSC1, EXOSC2, EXOSC3, EXOSC4, EXOSC5, EXOSC6, EXOSC7, EXOSC8 and EXOSC9; within the complex interacts with EXOSC1, EXOSC7 and EXOSC8. The catalytically inactive Exo-9 may associate with the catalytic subunit EXOSC10/RRP6. Exo-9 may associate with DIS3 to form the nucleolar exosome complex, or DIS3L to form the cytoplasmic exosome complex. Exo-9 is formed by a hexameric base ring consisting of the heterodimers EXOSC4-EXOSC9, EXOSC5-EXOSC8 and EXOSC6-EXOSC7, and a cap ring consisting of EXOSC1, EXOSC2 and EXOSC3. The RNA exosome complex associates with cofactors EXOSC10/RRP6, C1D/RRP47, MPHOSPH6/MPP6 and MTREX/MTR4.

It is found in the cytoplasm. Its subcellular location is the nucleus. The protein localises to the nucleolus. Non-catalytic component of the RNA exosome complex which has 3'-&gt;5' exoribonuclease activity and participates in a multitude of cellular RNA processing and degradation events. In the nucleus, the RNA exosome complex is involved in proper maturation of stable RNA species such as rRNA, snRNA and snoRNA, in the elimination of RNA processing by-products and non-coding 'pervasive' transcripts, such as antisense RNA species and promoter-upstream transcripts (PROMPTs), and of mRNAs with processing defects, thereby limiting or excluding their export to the cytoplasm. The RNA exosome may be involved in Ig class switch recombination (CSR) and/or Ig variable region somatic hypermutation (SHM) by targeting AICDA deamination activity to transcribed dsDNA substrates. In the cytoplasm, the RNA exosome complex is involved in general mRNA turnover and specifically degrades inherently unstable mRNAs containing AU-rich elements (AREs) within their 3' untranslated regions, and in RNA surveillance pathways, preventing translation of aberrant mRNAs. It seems to be involved in degradation of histone mRNA. The catalytic inactive RNA exosome core complex of 9 subunits (Exo-9) is proposed to play a pivotal role in the binding and presentation of RNA for ribonucleolysis, and to serve as a scaffold for the association with catalytic subunits and accessory proteins or complexes. The sequence is that of Exosome complex component MTR3 (EXOSC6) from Homo sapiens (Human).